Here is an 85-residue protein sequence, read N- to C-terminus: UPF0335 protein BH15140 (85 aa).

Belongs to the UPF0335 family.

In Bartonella henselae (strain ATCC 49882 / DSM 28221 / CCUG 30454 / Houston 1) (Rochalimaea henselae), this protein is UPF0335 protein BH15140.